The primary structure comprises 505 residues: Maturase K (505 aa).

This sequence belongs to the intron maturase 2 family. MatK subfamily.

It is found in the plastid. The protein localises to the chloroplast. In terms of biological role, usually encoded in the trnK tRNA gene intron. Probably assists in splicing its own and other chloroplast group II introns. In Allamanda cathartica (Yellow allamanda), this protein is Maturase K.